Here is a 174-residue protein sequence, read N- to C-terminus: Larval cuticle protein LCP-22 (174 aa).

The first 16 residues, 1-16, serve as a signal peptide directing secretion; that stretch reads MKFAVVFACMVAAVAA. A Chitin-binding type R&amp;R domain is found at 82-153; it reads DGSYTYFYET…PTGNAIPTSP (72 aa).

Functionally, component of the cuticle of the larva of Bombyx mori. The sequence is that of Larval cuticle protein LCP-22 (LCP22) from Bombyx mori (Silk moth).